We begin with the raw amino-acid sequence, 390 residues long: NADH-quinone oxidoreductase subunit H (390 aa).

The next 9 membrane-spanning stretches (helical) occupy residues 4-24, 78-98, 120-140, 157-177, 191-211, 247-266, 278-298, 315-337, and 341-360; these read WLLT…ALLT, LVYT…FGGI, VLAL…GGWA, MISY…LVGS, GWMI…SFAE, YVNM…GGWR, IADI…FVFI, FGWK…YIAF, and WGWW…LLAL.

Belongs to the complex I subunit 1 family. NDH-1 is composed of 15 different subunits. Subunits NuoA, H, J, K, L, M, N constitute the membrane sector of the complex.

Its subcellular location is the cell membrane. It catalyses the reaction a quinone + NADH + 5 H(+)(in) = a quinol + NAD(+) + 4 H(+)(out). Its function is as follows. NDH-1 shuttles electrons from NADH, via FMN and iron-sulfur (Fe-S) centers, to quinones in the respiratory chain. The immediate electron acceptor for the enzyme in this species is believed to be ubiquinone. Couples the redox reaction to proton translocation (for every two electrons transferred, four hydrogen ions are translocated across the cytoplasmic membrane), and thus conserves the redox energy in a proton gradient. This subunit may bind ubiquinone. In Deinococcus deserti (strain DSM 17065 / CIP 109153 / LMG 22923 / VCD115), this protein is NADH-quinone oxidoreductase subunit H.